Here is a 351-residue protein sequence, read N- to C-terminus: MPSETLWEIAKAEVEKRGINGSEGDGAEIAEKFVFFIGSKNGGKTTIILRCLDRDEPPKPTLALEYTYGRRAKGHNTPKDIAHFWELGGGTSLLDLISIPITGDTLRTFSLVLVLDLSKPNDLWPTMENLLQATKSHVDKVIMKLGKTNAKAVSEMRQKIWNNMPKDHPDHELIDPFPVPLVIIGSKYDVFQDFESEKRKVICKTLRFVAHYYGASLMFTSKSEALLLKIRGVINQLAFGIDKSKSICVDQNKPLFITAGLDSFGQIGSPPVPENDIGKLHAHSPMELWKKVYEKLFPPKSINTLKDIKDPARDPQYAENEVDEMRIQKDLELEQYKRSSSKSWKQIELDS.

The protein belongs to the dynein light intermediate chain family. In terms of assembly, light intermediate chain of the cytoplasmic dynein complex 2, a multisubunit complex composed at least of eleven different proteins. The cytoplasmic dynein 2 complex consists of two catalytic heavy chains (HCs) and a number of non-catalytic subunits presented by intermediate chains (ICs), light intermediate chains (LICs) and light chains (LCs). Among them, a heavy chain (DYNC2H1), two intermediate chains (DYNC2I2 and DYNC2I1), a light intermediate chain (DYNC2LI1), and a light chain (DYNLT2B) are unique to the dynein-2 complex, but a subset of light chains are also shared by dynein-1 and dynein-2 complexes. Dynein-2 complex is built around two copies of cytoplasmic dynein 2 heavy chain 1 (DYNC2H1). The C-terminal region of DYNC2H1 forms the motor domain, which converts the energy from ATP hydrolysis into movement. Its N-terminal region forms the tail, an extended structure that binds the other subunits and holds the two heavy chains in a homodimer. Interacts with DYNC2H1 (via N-terminus); this interaction stabilizes the dynein-2 complex structure. In terms of tissue distribution, expressed in bone, brain, kidney, and cartilage. Lower expression in heart, liver, lung, placenta and thymus.

The protein localises to the golgi apparatus. It localises to the cytoplasm. The protein resides in the cell projection. It is found in the cilium. Its subcellular location is the cytoskeleton. The protein localises to the cilium basal body. It localises to the cilium axoneme. The protein resides in the microtubule organizing center. It is found in the centrosome. Its function is as follows. Acts as one of several non-catalytic accessory components of the cytoplasmic dynein 2 complex (dynein-2 complex), a motor protein complex that drives the movement of cargos along microtubules within cilia and flagella in concert with the intraflagellar transport (IFT) system, facilitating the assembly of these organelles. Involved in the regulation of ciliary length. In Homo sapiens (Human), this protein is Cytoplasmic dynein 2 light intermediate chain 1 (DYNC2LI1).